A 156-amino-acid polypeptide reads, in one-letter code: Small ribosomal subunit protein uS7 (156 aa).

Belongs to the universal ribosomal protein uS7 family. In terms of assembly, part of the 30S ribosomal subunit. Contacts proteins S9 and S11.

Functionally, one of the primary rRNA binding proteins, it binds directly to 16S rRNA where it nucleates assembly of the head domain of the 30S subunit. Is located at the subunit interface close to the decoding center, probably blocks exit of the E-site tRNA. This chain is Small ribosomal subunit protein uS7, found in Polynucleobacter asymbioticus (strain DSM 18221 / CIP 109841 / QLW-P1DMWA-1) (Polynucleobacter necessarius subsp. asymbioticus).